A 729-amino-acid polypeptide reads, in one-letter code: DNA gyrase subunit B, chloroplastic/mitochondrial (729 aa).

The Toprim domain maps to 510–617; the sequence is SEIFIVEGDS…RYQKALFDEG (108 aa). Positions 516, 590, and 592 each coordinate Mg(2+).

Belongs to the type II topoisomerase GyrB family. Made up of two chains. The A chain is responsible for DNA breakage and rejoining; the B chain catalyzes ATP hydrolysis. The cofactor is Mg(2+). Mn(2+) is required as a cofactor. Requires Ca(2+) as cofactor.

The protein localises to the plastid. The protein resides in the chloroplast. Its subcellular location is the mitochondrion. The catalysed reaction is ATP-dependent breakage, passage and rejoining of double-stranded DNA.. A type II topoisomerase that negatively supercoils closed circular double-stranded DNA in an ATP-dependent manner. The sequence is that of DNA gyrase subunit B, chloroplastic/mitochondrial (GYRB) from Oryza sativa subsp. japonica (Rice).